Reading from the N-terminus, the 521-residue chain is GMP synthase [glutamine-hydrolyzing] (521 aa).

The Glutamine amidotransferase type-1 domain maps to 9–203; sequence KILILDFGSQ…ISGICQCEKN (195 aa). Residue Cys-86 is the Nucleophile of the active site. Active-site residues include His-177 and Glu-179. Residues 204–396 form the GMPS ATP-PPase domain; the sequence is WTTDNIIAKL…LSIPPHIIYR (193 aa). 231–237 contacts ATP; it reads SGGVDSL.

As to quaternary structure, homodimer.

The enzyme catalyses XMP + L-glutamine + ATP + H2O = GMP + L-glutamate + AMP + diphosphate + 2 H(+). It functions in the pathway purine metabolism; GMP biosynthesis; GMP from XMP (L-Gln route): step 1/1. Catalyzes the synthesis of GMP from XMP. The chain is GMP synthase [glutamine-hydrolyzing] from Ruthia magnifica subsp. Calyptogena magnifica.